A 194-amino-acid chain; its full sequence is Large ribosomal subunit protein eL15 (194 aa).

The interval 165 to 194 (AGKKGRGLMNKGKGAEKVRPGIRANKKLGK) is disordered.

Belongs to the eukaryotic ribosomal protein eL15 family.

The chain is Large ribosomal subunit protein eL15 from Methanococcus aeolicus (strain ATCC BAA-1280 / DSM 17508 / OCM 812 / Nankai-3).